The chain runs to 75 residues: Conotoxin Leo-O3 (75 aa).

The N-terminal stretch at 1–22 is a signal peptide; that stretch reads MKLTCVVIVAVLFLTACQLATA. Positions 23 to 42 are excised as a propeptide; that stretch reads DISGGMRKHRALRSTTKLSR. 3 disulfide bridges follow: Cys-47–Cys-60, Cys-54–Cys-63, and Cys-59–Cys-69. Cys-69 bears the Cysteine amide mark. Positions 70–75 are excised as a propeptide; the sequence is GSGLHV.

This sequence belongs to the conotoxin O1 superfamily. As to expression, expressed by the venom duct.

Its subcellular location is the secreted. In Conus leopardus (Leopard cone), this protein is Conotoxin Leo-O3.